The chain runs to 481 residues: MYAAVKPLSNYLRLKTVRIYDPIFTLHSKCTIVILLTCTFLLSAKQYFGEPILCLSSERQADYVQSYCWTMGTYILPAEVDRDGGSSWEYALYAPTSTAAETFNVSSLRALVAQNEQYARFISIAEGVGPETRGVTKRMYLRYYQWVFMILLFQSLLFYFPSFLWKVWEGQRMEQLCCEVGDALIVEATYRTRLQMLTRYFRAQFAPIHWCYSIKYAFCELLNVFISILNFWLMDVVFNGFWYKYIHALAAIPVYDWNLWNLMTSRVFPKVAKCEMFVYGPSGTPNIMDILCVLPLNILNEKIFAVLYVWFLFIALLAIMNILYRLLVICCPELRLQLLRTHLNGMPKSHVREVLASAGYGDWFVLMCVSINVNPTLFRELLEQLYAKLNQARCTEPVFAEQPCQQVPQLAQVPQLFSHAKLDRCPSRNCSLLIDPTADRHSICTESSHRVTAMPTAPTLNLMAPNDEIISMDRFFHESHA.

Over 1–21 (MYAAVKPLSNYLRLKTVRIYD) the chain is Cytoplasmic. Residues 22–42 (PIFTLHSKCTIVILLTCTFLL) form a helical membrane-spanning segment. Residues 43 to 144 (SAKQYFGEPI…VTKRMYLRYY (102 aa)) lie on the Extracellular side of the membrane. The chain crosses the membrane as a helical span at residues 145 to 165 (QWVFMILLFQSLLFYFPSFLW). The Cytoplasmic portion of the chain corresponds to 166–220 (KVWEGQRMEQLCCEVGDALIVEATYRTRLQMLTRYFRAQFAPIHWCYSIKYAFCE). A helical membrane pass occupies residues 221–241 (LLNVFISILNFWLMDVVFNGF). The Extracellular portion of the chain corresponds to 242-302 (WYKYIHALAA…VLPLNILNEK (61 aa)). A helical transmembrane segment spans residues 303–323 (IFAVLYVWFLFIALLAIMNIL). Residues 324-481 (YRLLVICCPE…MDRFFHESHA (158 aa)) are Cytoplasmic-facing.

The protein belongs to the pannexin family. Uniform expression in the imaginal wing disk. Expressed in an outer layer of the pupal developing CNS. Also expressed in pupal retina: cone cells and primary pigment cells.

The protein resides in the cell membrane. The protein localises to the cell junction. It localises to the gap junction. Its function is as follows. Structural components of the gap junctions. The protein is Innexin inx6 (Inx6) of Drosophila melanogaster (Fruit fly).